The primary structure comprises 173 residues: Protein PLASTID REDOX INSENSITIVE 2, chloroplastic (173 aa).

The transit peptide at 1 to 55 (MATRAWVAAAVALNPQLLPLRSCSPTKSVSPAQRSASMGLRLRSGRPCLGKFVCR) directs the protein to the chloroplast.

The protein resides in the plastid. Its subcellular location is the chloroplast stroma. It localises to the chloroplast nucleoid. Functionally, required for the activity of the plastid-encoded RNA polymerase (PEP) and full expression of genes transcribed by PEP. The polypeptide is Protein PLASTID REDOX INSENSITIVE 2, chloroplastic (Zea mays (Maize)).